A 183-amino-acid polypeptide reads, in one-letter code: Ribosome rescue factor SmrB (183 aa).

Residues 98–173 (LDLHGLTQLQ…GDAALLVLIE (76 aa)) form the Smr domain.

It belongs to the SmrB family. As to quaternary structure, associates with collided ribosomes, but not with correctly translating polysomes.

Its function is as follows. Acts as a ribosome collision sensor. Detects stalled/collided disomes (pairs of ribosomes where the leading ribosome is stalled and a second ribosome has collided with it) and endonucleolytically cleaves mRNA at the 5' boundary of the stalled ribosome. Stalled/collided disomes form a new interface (primarily via the 30S subunits) that binds SmrB. Cleaved mRNA becomes available for tmRNA ligation, leading to ribosomal subunit dissociation and rescue of stalled ribosomes. In Shigella boydii serotype 18 (strain CDC 3083-94 / BS512), this protein is Ribosome rescue factor SmrB.